A 126-amino-acid chain; its full sequence is Putative lipoprotein LprD (126 aa).

The N-terminal stretch at 1-21 (MSTTRRRRPALIALVIIATCG) is a signal peptide. A lipid anchor (N-palmitoyl cysteine) is attached at Cys22. A lipid anchor (S-diacylglycerol cysteine) is attached at Cys22. Residues 40-60 (FQNLGYALQWPLFAWFCVYAY) form a helical membrane-spanning segment. Residues 70–101 (PPQPPTGGAAAEIPAGLLPERPKPAQQPPDDP) are disordered.

The protein to M.leprae ML1177.

The protein resides in the cell membrane. This Mycobacterium tuberculosis (strain CDC 1551 / Oshkosh) protein is Putative lipoprotein LprD (lprD).